The sequence spans 353 residues: MDGFRIFTSDNYTEDDLGSGDYDSIKEPCFREENAHFNRIFLPTVYSIIFLTGIVGNGLVILVMGYQKKLRSMTDKYRLHLSVADLLFVLTLPFWAVDAVANWYFGKFLCKAVHVIYTVNLYSSVLILAFISLDRYLAIVHATNSQRPRKLLAEKVVYVGVWIPALLLTIPDFIFANVREGDGRYICDRFYPNDLWLVVFQFQHIMVGLILPGIVILSCYCIIISKLSHSKGYQKRKALKTTVILILAFFACWLPYYIGISIDSFILLEIIQQGCEFESTVHKWISITEALAFFHCCLNPILYAFLGAKFKTSAQHALTSVSRGSSLKILSKGKRGGHSSVSTESESSSFHSS.

The interval 1 to 22 (MDGFRIFTSDNYTEDDLGSGDY) is important for chemokine binding and signaling. Over 1–39 (MDGFRIFTSDNYTEDDLGSGDYDSIKEPCFREENAHFNR) the chain is Extracellular. Asn-11 is a glycosylation site (N-linked (GlcNAc...) asparagine). Position 12 is a sulfotyrosine (Tyr-12). O-linked (Xyl...) (chondroitin sulfate) serine glycosylation occurs at Ser-19. Tyr-22 is subject to Sulfotyrosine. Intrachain disulfides connect Cys-29/Cys-275 and Cys-110/Cys-187. A helical membrane pass occupies residues 40 to 64 (IFLPTVYSIIFLTGIVGNGLVILVM). Residues 65–78 (GYQKKLRSMTDKYR) are Cytoplasmic-facing. The chain crosses the membrane as a helical span at residues 79-100 (LHLSVADLLFVLTLPFWAVDAV). Residues 95-98 (WAVD) are chemokine binding. Residues 101–111 (ANWYFGKFLCK) are Extracellular-facing. Residues 112–131 (AVHVIYTVNLYSSVLILAFI) traverse the membrane as a helical segment. Residues 114–118 (HVIYT) are chemokine binding. Residues 132–155 (SLDRYLAIVHATNSQRPRKLLAEK) are Cytoplasmic-facing. Residues 134–136 (DRY) carry the Important for signaling motif. An involved in dimerization; when bound to chemokine region spans residues 136-148 (YLAIVHATNSQRP). Residues 156 to 175 (VVYVGVWIPALLLTIPDFIF) traverse the membrane as a helical segment. Topologically, residues 176–196 (ANVREGDGRYICDRFYPNDLW) are extracellular. The interval 187-191 (CDRFY) is chemokine binding, important for signaling. An involved in dimerization region spans residues 192–211 (PNDLWLVVFQFQHIMVGLIL). The helical transmembrane segment at 197 to 217 (LVVFQFQHIMVGLILPGIVIL) threads the bilayer. Topologically, residues 218-242 (SCYCIIISKLSHSKGYQKRKALKTT) are cytoplasmic. A helical membrane pass occupies residues 243-262 (VILILAFFACWLPYYIGISI). At 263-283 (DSFILLEIIQQGCEFESTVHK) the chain is on the extracellular side. Residues 267–269 (LLE) form an involved in dimerization region. A helical membrane pass occupies residues 284–303 (WISITEALAFFHCCLNPILY). Topologically, residues 304 to 353 (AFLGAKFKTSAQHALTSVSRGSSLKILSKGKRGGHSSVSTESESSSFHSS) are cytoplasmic. Residues Ser-320 and Ser-322 each carry the phosphoserine modification. 2 positions are modified to phosphoserine; by PKC and GRK6: Ser-325 and Ser-326. The tract at residues 330-353 (LSKGKRGGHSSVSTESESSSFHSS) is disordered. At Ser-331 the chain carries Phosphoserine; by GRK6. Lys-332 is covalently cross-linked (Glycyl lysine isopeptide (Lys-Gly) (interchain with G-Cter in ubiquitin)). Residues 338-353 (HSSVSTESESSSFHSS) are compositionally biased toward low complexity. Ser-340 carries the post-translational modification Phosphoserine; by GRK6. 2 positions are modified to phosphoserine: Ser-349 and Ser-352.

Belongs to the G-protein coupled receptor 1 family. In terms of assembly, monomer. Can form homodimers. Interacts with CD164. Interacts with ARRB2; the interaction is dependent on the C-terminal phosphorylation of CXCR4 and allows activation of MAPK1 and MAPK3. Interacts with ARR3; the interaction is dependent on the C-terminal phosphorylation of CXCR4 and modulates calcium mobilization. Interacts with RNF113A; the interaction, enhanced by CXCL12, promotes CXCR4 ubiquitination and subsequent degradation. Interacts (via the cytoplasmic C-terminal) with ITCH (via the WW domains I and II); the interaction, enhanced by CXCL12, promotes CXCR4 ubiquitination and leads to its degradation. Interacts with extracellular ubiquitin. Interacts with DBN1; this interaction is enhanced by antigenic stimulation. Following LPS binding, may form a complex with GDF5, HSP90AA1 and HSPA8. Post-translationally, phosphorylated on agonist stimulation. Rapidly phosphorylated on serine and threonine residues in the C-terminal. Phosphorylation at Ser-325 and Ser-326 leads to recruitment of ITCH, ubiquitination and protein degradation. In terms of processing, ubiquitinated after ligand binding, leading to its degradation. Ubiquitinated by ITCH at the cell membrane on agonist stimulation. The ubiquitin-dependent mechanism, endosomal sorting complex required for transport (ESCRT), then targets CXCR4 for lysosomal degradation. This process is dependent also on prior Ser-/Thr-phosphorylation in the C-terminal of CXCR4. Also binding of ARRB1 to STAM negatively regulates CXCR4 sorting to lysosomes though modulating ubiquitination of SFR5S. Sulfation is required for efficient binding of CXCL12/SDF-1alpha and promotes its dimerization. Post-translationally, O- and N-glycosylated. N-glycosylation can mask coreceptor function. The O-glycosylation chondroitin sulfate attachment does not affect interaction with CXCL12/SDF-1alpha nor its coreceptor activity.

It localises to the cell membrane. It is found in the cell junction. The protein localises to the early endosome. The protein resides in the late endosome. Its subcellular location is the lysosome. Functionally, receptor for the C-X-C chemokine CXCL12/SDF-1 that transduces a signal by increasing intracellular calcium ion levels and enhancing MAPK1/MAPK3 activation. Involved in the AKT signaling cascade. Plays a role in regulation of cell migration, e.g. during wound healing. Acts as a receptor for extracellular ubiquitin; leading to enhanced intracellular calcium ions and reduced cellular cAMP levels. Binds bacterial lipopolysaccharide (LPS) et mediates LPS-induced inflammatory response, including TNF secretion by monocytes. Involved in hematopoiesis and in cardiac ventricular septum formation. Also plays an essential role in vascularization of the gastrointestinal tract, probably by regulating vascular branching and/or remodeling processes in endothelial cells. Involved in cerebellar development. In the CNS, could mediate hippocampal-neuron survival. The sequence is that of C-X-C chemokine receptor type 4 (CXCR4) from Sus scrofa (Pig).